Consider the following 361-residue polypeptide: Chorismate synthase (361 aa).

NADP(+)-binding residues include Arg48 and Arg54. FMN is bound by residues 131–133, 243–244, Gly287, 302–306, and Arg328; these read RSS, NA, and KPTSS.

This sequence belongs to the chorismate synthase family. In terms of assembly, homotetramer. FMNH2 serves as cofactor.

It carries out the reaction 5-O-(1-carboxyvinyl)-3-phosphoshikimate = chorismate + phosphate. It functions in the pathway metabolic intermediate biosynthesis; chorismate biosynthesis; chorismate from D-erythrose 4-phosphate and phosphoenolpyruvate: step 7/7. Its function is as follows. Catalyzes the anti-1,4-elimination of the C-3 phosphate and the C-6 proR hydrogen from 5-enolpyruvylshikimate-3-phosphate (EPSP) to yield chorismate, which is the branch point compound that serves as the starting substrate for the three terminal pathways of aromatic amino acid biosynthesis. This reaction introduces a second double bond into the aromatic ring system. This chain is Chorismate synthase, found in Rhodopseudomonas palustris (strain HaA2).